Reading from the N-terminus, the 420-residue chain is Vitellogenin-3 (420 aa).

Residues 1–19 form the signal peptide; sequence MMSLRICLLATCLLVAAHA. A Phosphothreonine modification is found at threonine 37. Phosphoserine occurs at positions 177 and 178. Residues tyrosine 384 and tyrosine 390 each carry the sulfotyrosine modification. A disordered region spans residues 401–420; it reads GQRSPAHKQAAYHGMHHAQN.

This sequence belongs to the AB hydrolase superfamily. Lipase family. Post-translationally, tyrosine sulfation occurs in the female only and plays an essential functional role. In terms of tissue distribution, synthesized in the fat body and ovarian follicle cells and accumulate in the oocyte.

The protein localises to the secreted. Vitellogenin is the major yolk protein of eggs where it is used as a food source during embryogenesis. Vitellogenins and their receptor yl/yolkless are required for maintenance of microtubule plus-end orientation towards the posterior pole of oocytes. Involved in polarized localization of germ plasm components, such as osk mRNA and vas protein, to the oocyte posterior cortex. Receptor-mediated endocytosis by yl/yolkless is crucial for actin reorganization, mediated by osk isoform A/Long, required to anchor germ plasm components to the oocyte cortex. The sequence is that of Vitellogenin-3 (Yp3) from Drosophila melanogaster (Fruit fly).